Consider the following 48-residue polypeptide: Protein TUNAR (48 aa).

The disordered stretch occupies residues 1-20 (MVITSENDEDRGGQEKESKE). A compositionally biased stretch (basic and acidic residues) spans 10–20 (DRGGQEKESKE). The chain crosses the membrane as a helical span at residues 24-44 (LAMLGIIGTILNLIVIIFVYI).

In terms of assembly, interacts with ATPase ATP2A2/SERCA2. Interacts with ATPase ATP2A3/SERCA3; the interaction occurs at low levels in low glucose conditions and is increased by high glucose levels. As to expression, highly expressed in pancreatic islets where it is enriched in the insulin-producing beta cells.

It localises to the endoplasmic reticulum membrane. Its subcellular location is the extracellular vesicle membrane. Functionally, in neurons, plays a role in the regulation of intracellular Ca(2+), possibly by acting as an activator of ATP2A2/SERCA2, thus increasing the efficiency with which Ca(2+) is removed from the cytoplasm. Inhibits differentiation of embryonic stem cells into neurons and inhibits neurite outgrowth, likely as a result of its role in intracellular Ca(2+) regulation. In pancreatic beta cells, lowers Ca(2+) levels in the endoplasmic reticulum and enhances glucose-stimulated insulin secretion. In Homo sapiens (Human), this protein is Protein TUNAR.